Here is a 157-residue protein sequence, read N- to C-terminus: MALLTTGKSFIRTVEKSGAVAVYAPLEGGFEGRYVRRLRCSGYSVVNLTARGLGDVAAYLTQYHGIRPPHLGKKDIAGSGAAVGLRYYVPGIASYQLENLPQKSKGIILWIIEGFVLSRQEQEYLVSLTQDNPQIKVVVEMGGDRQFSFKPLADLLV.

The protein belongs to the complex I NdhN subunit family. As to quaternary structure, NDH-1 can be composed of about 15 different subunits; different subcomplexes with different compositions have been identified which probably have different functions.

Its subcellular location is the cellular thylakoid membrane. The enzyme catalyses a plastoquinone + NADH + (n+1) H(+)(in) = a plastoquinol + NAD(+) + n H(+)(out). It catalyses the reaction a plastoquinone + NADPH + (n+1) H(+)(in) = a plastoquinol + NADP(+) + n H(+)(out). NDH-1 shuttles electrons from an unknown electron donor, via FMN and iron-sulfur (Fe-S) centers, to quinones in the respiratory and/or the photosynthetic chain. The immediate electron acceptor for the enzyme in this species is believed to be plastoquinone. Couples the redox reaction to proton translocation, and thus conserves the redox energy in a proton gradient. Cyanobacterial NDH-1 also plays a role in inorganic carbon-concentration. The polypeptide is NAD(P)H-quinone oxidoreductase subunit N (Picosynechococcus sp. (strain ATCC 27264 / PCC 7002 / PR-6) (Agmenellum quadruplicatum)).